A 436-amino-acid chain; its full sequence is Immediate-early phosphoprotein 57 (436 aa).

Residues 71–140 (VPKRERSKTP…TPSNQNPLTE (70 aa)) are disordered. The segment covering 104–119 (QRPAPSARSRRPQPYS) has biased composition (low complexity). Over residues 127-138 (KPQSTPSNQNPL) the composition is skewed to polar residues.

The protein belongs to the herpesviridae UL69 family.

Its subcellular location is the host nucleus. The protein localises to the host cytoplasm. Acts at a post-transcriptional level to regulate viral gene expression. This chain is Immediate-early phosphoprotein 57 (57), found in Alcelaphine herpesvirus 1 (strain C500) (AlHV-1).